Here is a 904-residue protein sequence, read N- to C-terminus: E3 ubiquitin-protein ligase ZNF598 (904 aa).

Residues cysteine 29–arginine 69 form an RING-type zinc finger. A C2H2-type zinc finger spans residues proline 187–histidine 210. Tyrosine 306 is modified (phosphotyrosine). Disordered stretches follow at residues tyrosine 312–leucine 469 and valine 490–proline 656. Positions alanine 346–glutamine 358 are enriched in low complexity. Basic and acidic residues predominate over residues glutamate 359 to glycine 388. The span at glutamate 404–phenylalanine 416 shows a compositional bias: polar residues. The segment covering valine 418–glycine 431 has biased composition (low complexity). Residues glycine 428, glycine 431, and serine 437 each carry the phosphoserine modification. Low complexity-rich tracts occupy residues serine 447–threonine 461 and serine 502–serine 513. Positions leucine 521–proline 531 are enriched in polar residues. The span at lysine 534–arginine 543 shows a compositional bias: basic residues. The span at leucine 564 to proline 584 shows a compositional bias: polar residues.

The protein belongs to the ZNF598/HEL2 family. In terms of assembly, interacts with the E2 ubiquitin-conjugating enzyme UBE2D3. Component of the 4EHP-GYF2 complex, at least composed of EIF4E2, GIGYF2 and ZNF598.

The protein resides in the cytoplasm. It localises to the cytosol. It catalyses the reaction S-ubiquitinyl-[E2 ubiquitin-conjugating enzyme]-L-cysteine + [acceptor protein]-L-lysine = [E2 ubiquitin-conjugating enzyme]-L-cysteine + N(6)-ubiquitinyl-[acceptor protein]-L-lysine.. The protein operates within protein modification; protein ubiquitination. E3 ubiquitin-protein ligase that plays a key role in the ribosome quality control (RQC), a pathway that takes place when a ribosome has stalled during translation, leading to degradation of nascent peptide chains. ZNF598 is activated when ribosomes are stalled within an mRNA following translation of prematurely polyadenylated mRNAs. Acts as a ribosome collision sensor: specifically recognizes and binds collided di-ribosome, which arises when a trailing ribosome encounters a slower leading ribosome, leading to terminally arrest translation. Following binding to colliding ribosomes, mediates monoubiquitination of 40S ribosomal proteins RPS10/eS10 and RPS3/uS3, and 'Lys-63'-linked polyubiquitination of RPS20/uS10. Polyubiquitination of RPS20/uS10 promotes recruitment of the RQT (ribosome quality control trigger) complex, which drives the disassembly of stalled ribosomes, followed by degradation of nascent peptides. E3 ubiquitin-protein ligase activity is dependent on the E2 ubiquitin-conjugating enzyme UBE2D3. Also acts as an adapter that recruits the 4EHP-GYF2 complex to mRNAs. Independently of its role in RQC, may also act as a negative regulator of interferon-stimulated gene (ISG) expression. Functionally, (Microbial infection) Required for poxvirus protein synthesis by mediating ubiquitination of RPS10/eS10 and RPS20/uS10. Poxvirus encoding mRNAs contain unusual 5' poly(A) leaders and ZNF598 is required for their translational efficiency, possibly via its ability to suppress readthrough or sliding on shorter poly(A) tracts. This Homo sapiens (Human) protein is E3 ubiquitin-protein ligase ZNF598.